The primary structure comprises 565 residues: Phosphomethylpyrimidine synthase (565 aa).

Residues asparagine 203, methionine 232, tyrosine 261, histidine 297, 317–319, 358–361, and glutamate 397 contribute to the substrate site; these read SRG and DGLR. Zn(2+) is bound at residue histidine 401. Position 424 (tyrosine 424) interacts with substrate. Histidine 465 contributes to the Zn(2+) binding site. Residues cysteine 541, cysteine 544, and cysteine 549 each coordinate [4Fe-4S] cluster.

It belongs to the ThiC family. [4Fe-4S] cluster serves as cofactor.

It carries out the reaction 5-amino-1-(5-phospho-beta-D-ribosyl)imidazole + S-adenosyl-L-methionine = 4-amino-2-methyl-5-(phosphooxymethyl)pyrimidine + CO + 5'-deoxyadenosine + formate + L-methionine + 3 H(+). It functions in the pathway cofactor biosynthesis; thiamine diphosphate biosynthesis. Its function is as follows. Catalyzes the synthesis of the hydroxymethylpyrimidine phosphate (HMP-P) moiety of thiamine from aminoimidazole ribotide (AIR) in a radical S-adenosyl-L-methionine (SAM)-dependent reaction. In Bacteroides thetaiotaomicron (strain ATCC 29148 / DSM 2079 / JCM 5827 / CCUG 10774 / NCTC 10582 / VPI-5482 / E50), this protein is Phosphomethylpyrimidine synthase.